A 396-amino-acid chain; its full sequence is Phosphoglycerate kinase (396 aa).

Substrate contacts are provided by residues 21 to 23 (DLN), Arg-36, 59 to 62 (HLGR), Arg-113, and Arg-146. ATP-binding positions include Lys-197, Glu-319, and 345 to 348 (GGDT).

It belongs to the phosphoglycerate kinase family. Monomer.

It localises to the cytoplasm. It catalyses the reaction (2R)-3-phosphoglycerate + ATP = (2R)-3-phospho-glyceroyl phosphate + ADP. It functions in the pathway carbohydrate degradation; glycolysis; pyruvate from D-glyceraldehyde 3-phosphate: step 2/5. The protein is Phosphoglycerate kinase of Legionella pneumophila (strain Lens).